We begin with the raw amino-acid sequence, 236 residues long: Putative protein ZBED10P (236 aa).

The protein is Putative protein ZBED10P of Homo sapiens (Human).